A 97-amino-acid chain; its full sequence is UPF0729 protein AAEL015238 (97 aa).

The segment at 69-97 (EVAASGSGSNGTATAVGSEGEAEETKKSQ) is disordered. Polar residues predominate over residues 74–83 (GSGSNGTATA).

It belongs to the UPF0729 family.

The chain is UPF0729 protein AAEL015238 from Aedes aegypti (Yellowfever mosquito).